A 56-amino-acid chain; its full sequence is Bacteriocin sublancin-168 (56 aa).

Positions 1–19 (MEKLFKEVKLEELENQKGS) are excised as a propeptide. Intrachain disulfides connect Cys-26-Cys-55 and Cys-33-Cys-48. Cys-41 carries an S-linked (Glc) cysteine; by host glycan.

In terms of assembly, monomer. In terms of processing, production of active sublancin-168 requires at least one thiol-disulfide oxidoreductase (BdbB or, in its absence, BdbC). Membrane translocation and cleavage of the precursor are probably performed by SunT.

Its subcellular location is the secreted. Its function is as follows. Bacteriocin active against Gram-positive bacteria. Inhibits B.cereus spore outgrowth, after the germination stage, approximately 1000-fold better than it inhibits exponential growth of the same cells. Inhibits B.subtilis strain ATCC 6633. The protein is Bacteriocin sublancin-168 (sunA) of Bacillus pumilus (Bacillus mesentericus).